The sequence spans 177 residues: MVIEVVRIGQRLVRDDRVTTHVALVSRAFGAERIFMTEINPEIKDTLGKINDTWGGNFEIEFIDSWKPIVKKKKEEGFKIVHLSMYGEKINDAQEEIRKEENLLIVVGAEKVPREIYELADFNVGVGSQPHSEISALAILLDRIQGGQQFEKEFPNAKRKIIPTKTGKNVQVKETRD.

Residues leucine 83 and 108–112 (GAEKV) contribute to the S-adenosyl-L-methionine site.

It belongs to the aTrm56 family. In terms of assembly, homodimer.

The protein resides in the cytoplasm. It carries out the reaction cytidine(56) in tRNA + S-adenosyl-L-methionine = 2'-O-methylcytidine(56) in tRNA + S-adenosyl-L-homocysteine + H(+). Specifically catalyzes the AdoMet-dependent 2'-O-ribose methylation of cytidine at position 56 in tRNAs. The protein is tRNA (cytidine(56)-2'-O)-methyltransferase of Nitrosopumilus maritimus (strain SCM1).